Here is a 271-residue protein sequence, read N- to C-terminus: Phosphonates import ATP-binding protein PhnC 2 (271 aa).

The ABC transporter domain maps to 2–245 (LVVEGLTCRF…IARELYDLEA (244 aa)). Residue 34–41 (GRSGAGKS) coordinates ATP.

This sequence belongs to the ABC transporter superfamily. Phosphonates importer (TC 3.A.1.9.1) family. As to quaternary structure, the complex is composed of two ATP-binding proteins (PhnC), two transmembrane proteins (PhnE) and a solute-binding protein (PhnD).

It localises to the cell inner membrane. The catalysed reaction is phosphonate(out) + ATP + H2O = phosphonate(in) + ADP + phosphate + H(+). Functionally, part of the ABC transporter complex PhnCDE involved in phosphonates import. Responsible for energy coupling to the transport system. This Rhodopseudomonas palustris (strain BisB18) protein is Phosphonates import ATP-binding protein PhnC 2.